Consider the following 153-residue polypeptide: Nucleoside diphosphate kinase 3 (153 aa).

The ATP site is built by lysine 11, phenylalanine 59, arginine 87, threonine 93, arginine 104, and asparagine 114. Histidine 117 acts as the Pros-phosphohistidine intermediate in catalysis.

The protein belongs to the NDK family. Homohexamer. Mg(2+) is required as a cofactor.

The protein resides in the plastid. It localises to the chloroplast thylakoid lumen. The catalysed reaction is a 2'-deoxyribonucleoside 5'-diphosphate + ATP = a 2'-deoxyribonucleoside 5'-triphosphate + ADP. It carries out the reaction a ribonucleoside 5'-diphosphate + ATP = a ribonucleoside 5'-triphosphate + ADP. Major role in the synthesis of nucleoside triphosphates other than ATP. The ATP gamma phosphate is transferred to the NDP beta phosphate via a ping-pong mechanism, using a phosphorylated active-site intermediate. Shows the highest specificity towards GDP. The chain is Nucleoside diphosphate kinase 3 from Spinacia oleracea (Spinach).